Consider the following 367-residue polypeptide: Forkhead box protein I1-B (367 aa).

2 disordered regions span residues 1 to 21 (MNPV…HLPH) and 213 to 274 (DNGN…PPTV). Residues 128-222 (RPPYSYSALI…DNGNFRRKRK (95 aa)) constitute a DNA-binding region (fork-head). Positions 233–246 (AKRDEDHLNPKGKE) are enriched in basic and acidic residues. The segment covering 252 to 274 (TPSSSPEVLSPTGHSKSPSPPTV) has biased composition (polar residues).

Initially localized to the animal hemisphere (the presumptive ectoderm) of early-mid blastula embryos. Becomes restricted to head placodes, excluding the otic placodes, by the tailbud stages.

It localises to the nucleus. Functionally, transcription factor. Essential for ventral specification of the early cephalic (head) ectoderm during gastrulation, playing a role in the 'non-neural' versus 'neural' cell fate choice. Binds to DNA via the target sequence 5'-[AG]TAAA[CT]A-3', with 5'-ATAAACA-3' being the preferred binding site. This chain is Forkhead box protein I1-B (foxi1-b), found in Xenopus laevis (African clawed frog).